Consider the following 165-residue polypeptide: 3-isopropylmalate dehydratase small subunit (165 aa).

Belongs to the LeuD family. LeuD type 2 subfamily. Heterodimer of LeuC and LeuD.

The catalysed reaction is (2R,3S)-3-isopropylmalate = (2S)-2-isopropylmalate. Its pathway is amino-acid biosynthesis; L-leucine biosynthesis; L-leucine from 3-methyl-2-oxobutanoate: step 2/4. Functionally, catalyzes the isomerization between 2-isopropylmalate and 3-isopropylmalate, via the formation of 2-isopropylmaleate. The protein is 3-isopropylmalate dehydratase small subunit of Saccharolobus islandicus (strain Y.N.15.51 / Yellowstone #2) (Sulfolobus islandicus).